Reading from the N-terminus, the 70-residue chain is Small ribosomal subunit protein bS21 (70 aa).

This sequence belongs to the bacterial ribosomal protein bS21 family.

The sequence is that of Small ribosomal subunit protein bS21 from Bordetella avium (strain 197N).